The following is a 131-amino-acid chain: Fluoride-specific ion channel FluC (131 aa).

Helical transmembrane passes span 10–30 (AAVA…SGLV), 36–56 (FPMG…FLTW), 71–91 (LATV…YETV), and 99–119 (VLSI…VLGG). 2 residues coordinate Na(+): glycine 78 and threonine 81.

The protein belongs to the fluoride channel Fluc/FEX (TC 1.A.43) family.

It localises to the cell membrane. It carries out the reaction fluoride(in) = fluoride(out). Its activity is regulated as follows. Na(+) is not transported, but it plays an essential structural role and its presence is essential for fluoride channel function. Fluoride-specific ion channel. Important for reducing fluoride concentration in the cell, thus reducing its toxicity. This is Fluoride-specific ion channel FluC from Methanopyrus kandleri (strain AV19 / DSM 6324 / JCM 9639 / NBRC 100938).